The sequence spans 130 residues: Ribonuclease P protein component (130 aa).

This sequence belongs to the RnpA family. In terms of assembly, consists of a catalytic RNA component (M1 or rnpB) and a protein subunit.

The enzyme catalyses Endonucleolytic cleavage of RNA, removing 5'-extranucleotides from tRNA precursor.. Its function is as follows. RNaseP catalyzes the removal of the 5'-leader sequence from pre-tRNA to produce the mature 5'-terminus. It can also cleave other RNA substrates such as 4.5S RNA. The protein component plays an auxiliary but essential role in vivo by binding to the 5'-leader sequence and broadening the substrate specificity of the ribozyme. The chain is Ribonuclease P protein component from Desulfovibrio desulfuricans (strain ATCC 27774 / DSM 6949 / MB).